Here is a 141-residue protein sequence, read N- to C-terminus: Hemoglobin subunit alpha (141 aa).

One can recognise a Globin domain in the interval 1–141 (VLSAADKANV…VSTVLTSKYR (141 aa)). Ser3 is modified (phosphoserine). 2 positions are modified to N6-succinyllysine: Lys7 and Lys11. Lys16 carries the post-translational modification N6-acetyllysine; alternate. Lys16 bears the N6-succinyllysine; alternate mark. Lys40 is modified (N6-succinyllysine). Phosphoserine is present on Ser49. His58 provides a ligand contact to O2. His87 serves as a coordination point for heme b. Ser102 carries the post-translational modification Phosphoserine. Thr108 carries the phosphothreonine modification. The residue at position 124 (Ser124) is a Phosphoserine. Residues Thr134 and Thr137 each carry the phosphothreonine modification. Phosphoserine is present on Ser138.

Belongs to the globin family. As to quaternary structure, heterotetramer of two alpha chains and two beta chains. Red blood cells.

In terms of biological role, involved in oxygen transport from the lung to the various peripheral tissues. Hemopressin acts as an antagonist peptide of the cannabinoid receptor CNR1. Hemopressin-binding efficiently blocks cannabinoid receptor CNR1 and subsequent signaling. The protein is Hemoglobin subunit alpha (HBA) of Sus scrofa (Pig).